A 256-amino-acid polypeptide reads, in one-letter code: Protein FixA (256 aa).

Belongs to the ETF beta-subunit/FixA family. As to quaternary structure, heterodimer of FixA and FixB.

Its pathway is amine and polyamine metabolism; carnitine metabolism. Required for anaerobic carnitine reduction. May bring reductant to CaiA. The chain is Protein FixA from Escherichia coli O139:H28 (strain E24377A / ETEC).